Here is a 211-residue protein sequence, read N- to C-terminus: Large ribosomal subunit protein uL4 (211 aa).

Positions 41 to 53 are enriched in polar residues; the sequence is QAHSRQGTASTLT. The interval 41-78 is disordered; sequence QAHSRQGTASTLTRAEVRGGGRKPYKQKGTGRARQGTI. The span at 60-71 shows a compositional bias: basic residues; that stretch reads GGRKPYKQKGTG.

This sequence belongs to the universal ribosomal protein uL4 family. Part of the 50S ribosomal subunit.

In terms of biological role, one of the primary rRNA binding proteins, this protein initially binds near the 5'-end of the 23S rRNA. It is important during the early stages of 50S assembly. It makes multiple contacts with different domains of the 23S rRNA in the assembled 50S subunit and ribosome. Its function is as follows. Forms part of the polypeptide exit tunnel. The protein is Large ribosomal subunit protein uL4 of Prochlorococcus marinus (strain MIT 9313).